A 374-amino-acid polypeptide reads, in one-letter code: Fatty acid conjugase FAC2 A (374 aa).

A run of 2 helical transmembrane segments spans residues 50–70 (IIVTCILFYVASNYIPMLPGF) and 74–94 (IVWPVYWISQGVFLGRLWMIG). Positions 95–99 (HECGH) match the Histidine box-1 motif. Residues 131–135 (HRNHH) carry the Histidine box-2 motif. Helical transmembrane passes span 168–188 (MGLMITMLCKLTFGYAAYIMF), 219–239 (VLFSDVGICIVLYACYRIVMV), and 246–266 (FYVYGIPWVIMSAILFAATYL). Residues 306 to 310 (HVIHH) carry the Histidine box-3 motif.

Belongs to the fatty acid desaturase type 1 family. As to expression, expressed exclusively in the developing seeds. Not detected in leaves or flower buds.

It is found in the microsome membrane. It carries out the reaction a (9Z,12Z)-octadecadienoyl-containing glycerolipid + AH2 + O2 = a (8E,10E,12Z)-octadecatrienoyl-containing glycerolipid + A + 2 H2O. It functions in the pathway lipid metabolism; polyunsaturated fatty acid biosynthesis. Its function is as follows. Fatty acid conjugase converting 18:2(9Z, 12Z) to calendic acid 18:3(8E, 10E, 12Z). Converts alpha-linolenic acid (18:3(9Z, 12Z, 15Z)) into 18:4(8E, 10E, 12Z, 15Z). Also has weak activity on the mono-unsaturates 16:1(9Z) and 18:1(9Z) producing two conjugated double bonds at delta(8) and delta(10) position. This Calendula officinalis (Pot marigold) protein is Fatty acid conjugase FAC2 A.